Reading from the N-terminus, the 221-residue chain is Tetraspanin-2 (221 aa).

The Cytoplasmic portion of the chain corresponds to 1–13 (MGRFRGGLRCIKY). The helical transmembrane segment at 14 to 34 (LLLGFNLLFWLAGSAVIAFGL) threads the bilayer. The Extracellular portion of the chain corresponds to 35-54 (WFRFGGTMKDLSSEDKSPEY). The helical transmembrane segment at 55-75 (FYVGLYVLVGAGALMMTVGFF) threads the bilayer. Over 76–90 (GCCGAMRESQCVLGS) the chain is Cytoplasmic. A helical membrane pass occupies residues 91 to 111 (FFTCLLVIFAAEVTTGVFAFI). The Extracellular portion of the chain corresponds to 112-188 (GKDVAIRHVQ…ETVISAKLQL (77 aa)). A glycan (N-linked (GlcNAc...) asparagine) is linked at N139. Residues 189–209 (IGIVGIGIAGLTIFGMIFSMV) traverse the membrane as a helical segment. The Cytoplasmic portion of the chain corresponds to 210 to 221 (LCCAIRNSRDVI).

The protein belongs to the tetraspanin (TM4SF) family.

The protein resides in the membrane. Functionally, may play a role in signalling in oligodendrocytes in the early stages of their terminal differentiation into myelin-forming glia and may also function in stabilizing the mature sheath. This Mus musculus (Mouse) protein is Tetraspanin-2 (Tspan2).